The primary structure comprises 231 residues: NADH-ubiquinone oxidoreductase chain 4 (231 aa).

Transmembrane regions (helical) follow at residues 1-21 (PIAG…YGII), 34-54 (LFIP…LTCL), 61-80 (SLIA…AVII), 84-106 (WGLS…LFCL), 118-138 (ILIL…WWLL), 156-176 (LLIV…LGLS), and 211-231 (LLMI…ELVI).

This sequence belongs to the complex I subunit 4 family.

The protein localises to the mitochondrion membrane. The catalysed reaction is a ubiquinone + NADH + 5 H(+)(in) = a ubiquinol + NAD(+) + 4 H(+)(out). Its function is as follows. Core subunit of the mitochondrial membrane respiratory chain NADH dehydrogenase (Complex I) that is believed to belong to the minimal assembly required for catalysis. Complex I functions in the transfer of electrons from NADH to the respiratory chain. The immediate electron acceptor for the enzyme is believed to be ubiquinone. The chain is NADH-ubiquinone oxidoreductase chain 4 (MT-ND4) from Hypnale hypnale (Merrem's hump-nosed viper).